Reading from the N-terminus, the 263-residue chain is MKIMKLAGAVAIFSLFLTACNDKAEKLKVGVISGPEHKVMEVAAKIAKEKYNRDVELVVFTDYATPNAALDKGDLDLNAFQHKPYLDNQIQEKGYKLVPVGNTFVYPIAAYSKKIKSLAELKDGDTIAVPNDPTNLARALILLEKQDLIKLRADAGLKATSVDIIENPRKLVIQEIEAPLLPRTLDDVAFSIINTTYAGQNGLTPTKDGIFVEDKDSPYVNLIVARENNQHSEAVKDLVKAYQTEEVYNKANEEFKGAMIKGW.

The N-terminal stretch at 1–19 (MKIMKLAGAVAIFSLFLTA) is a signal peptide. C20 carries the N-palmitoyl cysteine lipid modification. A lipid anchor (S-diacylglycerol cysteine) is attached at C20.

It belongs to the NlpA lipoprotein family.

Its subcellular location is the cell outer membrane. This is Outer membrane lipoprotein 3 (plpC) from Mannheimia haemolytica (Pasteurella haemolytica).